The following is a 555-amino-acid chain: Trehalase (555 aa).

Positions 1–16 (MIPFLLMVAFADTVLQ) are cleaved as a signal peptide. Residue Asn-46 is glycosylated (N-linked (GlcNAc...) asparagine). Substrate-binding positions include Arg-164, 171-172 (WD), and Asn-208. Asn-216 carries N-linked (GlcNAc...) asparagine glycosylation. Residues 217 to 219 (RSQ), 282 to 284 (RPE), and Gly-316 each bind substrate. The Proton donor/acceptor role is filled by Asp-318. Residues Asn-334 and Asn-371 are each glycosylated (N-linked (GlcNAc...) asparagine). Residue Glu-516 is the Proton donor/acceptor of the active site. Glu-531 provides a ligand contact to substrate.

Belongs to the glycosyl hydrolase 37 family. Bean-shaped accessory glands (bags).

It localises to the secreted. It catalyses the reaction alpha,alpha-trehalose + H2O = alpha-D-glucose + beta-D-glucose. This Tenebrio molitor (Yellow mealworm beetle) protein is Trehalase.